The chain runs to 90 residues: Small ribosomal subunit protein bS16 (90 aa).

It belongs to the bacterial ribosomal protein bS16 family.

This chain is Small ribosomal subunit protein bS16, found in Geobacillus sp. (strain WCH70).